A 442-amino-acid polypeptide reads, in one-letter code: tRNA(Ile)-lysidine synthase (442 aa).

28–33 is an ATP binding site; the sequence is SGGLDS.

This sequence belongs to the tRNA(Ile)-lysidine synthase family.

The protein localises to the cytoplasm. It catalyses the reaction cytidine(34) in tRNA(Ile2) + L-lysine + ATP = lysidine(34) in tRNA(Ile2) + AMP + diphosphate + H(+). Its function is as follows. Ligates lysine onto the cytidine present at position 34 of the AUA codon-specific tRNA(Ile) that contains the anticodon CAU, in an ATP-dependent manner. Cytidine is converted to lysidine, thus changing the amino acid specificity of the tRNA from methionine to isoleucine. This Pseudomonas aeruginosa (strain ATCC 15692 / DSM 22644 / CIP 104116 / JCM 14847 / LMG 12228 / 1C / PRS 101 / PAO1) protein is tRNA(Ile)-lysidine synthase.